The chain runs to 121 residues: Surface glycoprotein CD59 homolog (121 aa).

The first 19 residues, 1–19 (MYILFTLVLTFVFCKPIHS), serve as a signal peptide directing secretion. The 85-residue stretch at 20–104 (LQCYNCSHST…ENIKRTISDK (85 aa)) folds into the UPAR/Ly6 domain. 5 disulfides stabilise this stretch: Cys22-Cys45, Cys25-Cys32, Cys38-Cys58, Cys64-Cys82, and Cys83-Cys88. Asn24 is a glycosylation site (N-linked (GlcNAc...) asparagine; by host). Asn96 is lipidated: GPI-anchor amidated asparagine; by host. The propeptide at 97-121 (IKRTISDKALLLLALFLVTAWNFPL) is removed in mature form.

The protein resides in the host cell membrane. In Saimiriine herpesvirus 2 (strain 11) (SaHV-2), this protein is Surface glycoprotein CD59 homolog (15).